The following is a 755-amino-acid chain: uncharacterized protein (755 aa).

7 disordered regions span residues 1–44, 72–91, 99–174, 393–467, 523–545, 584–672, and 734–755; these read MAAP…AAAQ, AEHS…ATAQ, FSLS…IPHY, TTNV…SSSR, LPKT…EGGG, VSSS…LPSG, and QAAT…PRRK. Low complexity-rich tracts occupy residues 10–25 and 35–44; these read TTTQ…TTTT and TTTGSGAAAQ. 3 stretches are compositionally biased toward low complexity: residues 112–130, 139–151, and 393–412; these read ISSS…NASS, SPDL…LSGS, and TTNV…TKST. Residues 429–446 are compositionally biased toward acidic residues; it reads IEEDTIQFDDPGQGEDDN. Residues 452–462 are compositionally biased toward pro residues; that stretch reads NTPPPPGPPPN. Over residues 536-545 the composition is skewed to gly residues; sequence ATGGVTEGGG. Polar residues predominate over residues 590–599; the sequence is LPQPQVATTI. Composition is skewed to low complexity over residues 600–666 and 740–755; these read TPQA…QTPQ and SQPS…PRRK.

Belongs to the chlamydial CPn_0572/CT_456/TC_0741 family.

This is an uncharacterized protein from Chlamydia pneumoniae (Chlamydophila pneumoniae).